Here is a 1288-residue protein sequence, read N- to C-terminus: Contactin-associated protein-like 3B (1288 aa).

An N-terminal signal peptide occupies residues 1-25 (MASVAWAVLKVLLLLPTQTWSPVGA). The disordered stretch occupies residues 23–61 (VGAGNPPDCDSPLASALPRSSFSSSSELSSSHGPGFSRL). Topologically, residues 26–1245 (GNPPDCDSPL…LVNADRRDSA (1220 aa)) are extracellular. An F5/8 type C domain is found at 31 to 177 (CDSPLASALP…IGMRIEVYGC (147 aa)). Intrachain disulfides connect Cys-31/Cys-177, Cys-332/Cys-364, Cys-513/Cys-545, Cys-551/Cys-562, Cys-556/Cys-571, and Cys-573/Cys-583. A compositionally biased stretch (low complexity) spans 33–59 (SPLASALPRSSFSSSSELSSSHGPGFS). 2 consecutive Laminin G-like domains span residues 183–364 (VVYF…SFSC) and 370–545 (VPVT…IDSC). N-linked (GlcNAc...) asparagine glycosylation is present at Asn-359. The 38-residue stretch at 547–584 (ITDRCLPSYCEHGGECSQSWDTFSCDCLGTGYTGETCH) folds into the EGF-like 1 domain. One can recognise a Fibrinogen C-terminal domain in the interval 585–792 (SSLYEQSCEA…LLCRGDKSFW (208 aa)). The N-linked (GlcNAc...) asparagine glycan is linked to Asn-706. In terms of domain architecture, Laminin G-like 3 spans 793–958 (NSASFNTETS…TVTPGVEPGC (166 aa)). Disulfide bonds link Cys-931-Cys-958, Cys-962-Cys-975, Cys-969-Cys-984, Cys-986-Cys-996, and Cys-1167-Cys-1203. Residues 959–997 (AGHCSTYGHLCRNGGRCREKRRGVTCDCAFSAYDGPFCS) form the EGF-like 2 domain. The 188-residue stretch at 1016-1203 (EHYTLSENSS…RGHVAPMARC (188 aa)) folds into the Laminin G-like 4 domain. Positions 1215–1236 (ELAPRLAGGAGRSGPVDEGEPL) are disordered. The chain crosses the membrane as a helical span at residues 1246–1266 (VIGGVIAVEIFILLCITAIAI). Topologically, residues 1267–1288 (RIYQQRKLRKENESKVSKKEEC) are cytoplasmic.

This sequence belongs to the neurexin family.

The protein resides in the membrane. The protein is Contactin-associated protein-like 3B (CNTNAP3B) of Homo sapiens (Human).